A 119-amino-acid chain; its full sequence is Endocuticle structural glycoprotein SgAbd-3 (119 aa).

Position 1 is a pyrrolidone carboxylic acid (Q1). A Chitin-binding type R&amp;R domain is found at 24 to 98; sequence DGSYRYSFET…PQGAHLPTPP (75 aa). The interval 33 to 55 is disordered; that stretch reads TSDGQRASQEGALKQVSAPGPDG. T96 is a glycosylation site (O-linked (HexNAc...) threonine).

Component of the abdominal endocuticle. The protein is Endocuticle structural glycoprotein SgAbd-3 of Schistocerca gregaria (Desert locust).